A 324-amino-acid polypeptide reads, in one-letter code: tRNA dimethylallyltransferase (324 aa).

Glycine 17–threonine 24 contacts ATP. Substrate is bound at residue threonine 19–threonine 24. Interaction with substrate tRNA regions lie at residues aspartate 42 to leucine 45, glutamine 166 to arginine 170, and arginine 251 to arginine 256.

This sequence belongs to the IPP transferase family. In terms of assembly, monomer. Requires Mg(2+) as cofactor.

It carries out the reaction adenosine(37) in tRNA + dimethylallyl diphosphate = N(6)-dimethylallyladenosine(37) in tRNA + diphosphate. Catalyzes the transfer of a dimethylallyl group onto the adenine at position 37 in tRNAs that read codons beginning with uridine, leading to the formation of N6-(dimethylallyl)adenosine (i(6)A). This Burkholderia pseudomallei (strain 668) protein is tRNA dimethylallyltransferase.